We begin with the raw amino-acid sequence, 523 residues long: MRALFSSPAADTAGQQEALAVPLARLRFAAPLAALLGVMHTLAFAPNRWWWLQILSLAGLAALVRQAPRLRDVAWVGYAFGLGWFLSGIWWLYISMHVYGDMPAWMAAAAVLLFSAYLALHPALAAWLWQRLARGRQLSGAASALVFGAAWLVSEWLRGTEWTGFPWLNGGYAHTDGPLAGYAPLVGVYGVVAIAATLAGLLCAAAERRLHWLAGLAGVAVLAAGWPLHTIAWTQPVGKPITVRLLQGNVPQDVKFQQTGIDHSLALYTKMVTEQPAQLVVTPETAFPILLQDMPQEIALAIRTYVDTTGSSVLFGAANADSAVDYTNSAFGVGPWFKGVYRYDKHHLVPFGEFIPFGFHWFVHMMNMPLGDFRRGLPVQPPMPVAGQRVAPNICYEDLFGEEIAASLRQAERPATMLANVTNLAWFGDTIALDQHLQISRMRALESGRPMLRATNTGATAVVRPDGSVQARLPVFTLGTLQADVQGMQGLTPFVRTGNAPALGAGVLVLLAALARRRRAGAA.

Transmembrane regions (helical) follow at residues 26 to 46 (LRFAAPLAALLGVMHTLAFAP), 49 to 66 (WWWLQILSLAGLAALVRQ), 74 to 94 (AWVGYAFGLGWFLSGIWWLYI), 109 to 129 (AAVLLFSAYLALHPALAAWLW), 137 to 157 (QLSGAASALVFGAAWLVSEWL), 185 to 205 (LVGVYGVVAIAATLAGLLCAA), and 212 to 232 (WLAGLAGVAVLAAGWPLHTIA). The CN hydrolase domain maps to 246 to 487 (LQGNVPQDVK…LGTLQADVQG (242 aa)). Residue Glu284 is the Proton acceptor of the active site. Residue Lys345 is part of the active site. Catalysis depends on Cys395, which acts as the Nucleophile. Residues 494 to 514 (FVRTGNAPALGAGVLVLLAAL) form a helical membrane-spanning segment.

This sequence belongs to the CN hydrolase family. Apolipoprotein N-acyltransferase subfamily.

The protein resides in the cell inner membrane. The enzyme catalyses N-terminal S-1,2-diacyl-sn-glyceryl-L-cysteinyl-[lipoprotein] + a glycerophospholipid = N-acyl-S-1,2-diacyl-sn-glyceryl-L-cysteinyl-[lipoprotein] + a 2-acyl-sn-glycero-3-phospholipid + H(+). Its pathway is protein modification; lipoprotein biosynthesis (N-acyl transfer). In terms of biological role, catalyzes the phospholipid dependent N-acylation of the N-terminal cysteine of apolipoprotein, the last step in lipoprotein maturation. The sequence is that of Apolipoprotein N-acyltransferase from Ralstonia nicotianae (strain ATCC BAA-1114 / GMI1000) (Ralstonia solanacearum).